Reading from the N-terminus, the 390-residue chain is Oxysterol-binding protein 10 (390 aa).

This sequence belongs to the OSBP family.

The polypeptide is Oxysterol-binding protein 10 (osbJ) (Dictyostelium discoideum (Social amoeba)).